The following is a 233-amino-acid chain: Transcriptional regulatory protein WalR (233 aa).

One can recognise a Response regulatory domain in the interval 4 to 117 (KVVVVDDEKP…ELIARVKANL (114 aa)). Position 53 is a 4-aspartylphosphate (Asp-53). The segment at residues 132–231 (TNEITIKDIV…RRGVGYFLQQ (100 aa)) is a DNA-binding region (ompR/PhoB-type).

In terms of processing, phosphorylated by WalK.

The protein resides in the cytoplasm. In terms of biological role, member of the two-component regulatory system WalK/WalR. In Staphylococcus haemolyticus (strain JCSC1435), this protein is Transcriptional regulatory protein WalR (walR).